A 429-amino-acid polypeptide reads, in one-letter code: MYRSHFIADVTPEYDGKEVIWAGWVHLLRDLGGKKFIILRDKTGLGQVVVDKNSSAFGISQELTQESVIQVRGIVKADKRAPRGIELHAEEITLLSKAKAPLPLDVSGKVKADIDTRLRERVLDLRRQEMQAVIKIQSLALKAFRETLYKEGFIEIFTPKIIASATEGGAQLFPVIYFGKEAFLAQSPQLYKELMAGVVERVFEVAPAWRAEESDTPFHLAEFISMDVEMAFADYNDVMQLLEKILHNIVKTIKEEGKEELKILNYEPPEVKIPIKRLKYTEAIEILRSKGYNIKFGDDIGTPELRILNEELKEDLYFIVDWPSDARPFYTKSKSENPELSESFDLIYKFLEIVSGSTRNHKREVLEEALKKKGLKPESFEFFLKWFDYGMPPHAGFGMGLARLMVMLTGIQSVKEIVPFPRDKKRLTP.

Glu167 provides a ligand contact to L-aspartate. Positions 189–192 (QLYK) are aspartate. An L-aspartate-binding site is contributed by Arg210. ATP is bound by residues 210–212 (RAE) and Glu352. The Mg(2+) site is built by Glu352 and Ser355. Ser355 and Arg359 together coordinate L-aspartate. 400-403 (GLAR) contacts ATP.

Belongs to the class-II aminoacyl-tRNA synthetase family. Type 2 subfamily. In terms of assembly, homodimer. Requires Mg(2+) as cofactor.

The protein resides in the cytoplasm. The catalysed reaction is tRNA(Asx) + L-aspartate + ATP = L-aspartyl-tRNA(Asx) + AMP + diphosphate. In terms of biological role, aspartyl-tRNA synthetase with relaxed tRNA specificity since it is able to aspartylate not only its cognate tRNA(Asp) but also tRNA(Asn). Reaction proceeds in two steps: L-aspartate is first activated by ATP to form Asp-AMP and then transferred to the acceptor end of tRNA(Asp/Asn). The chain is Aspartate--tRNA(Asp/Asn) ligase from Sulfurisphaera tokodaii (strain DSM 16993 / JCM 10545 / NBRC 100140 / 7) (Sulfolobus tokodaii).